Reading from the N-terminus, the 130-residue chain is Histone H2A type 1-E (130 aa).

A disordered region spans residues 1–22; that stretch reads MSGRGKQGGKARAKAKTRSSRA. Residue Ser2 is modified to N-acetylserine. Ser2 is subject to Phosphoserine; by RPS6KA5. The residue at position 4 (Arg4) is a Citrulline; alternate. Arg4 carries the symmetric dimethylarginine; by PRMT5; alternate modification. An N6-(2-hydroxyisobutyryl)lysine; alternate mark is found at Lys6 and Lys10. The residue at position 6 (Lys6) is an N6-acetyllysine; alternate. The segment covering 7–19 has biased composition (basic residues); the sequence is QGGKARAKAKTRS. An N6-lactoyllysine; alternate modification is found at Lys10. At Lys10 the chain carries N6-succinyllysine; alternate. Glycyl lysine isopeptide (Lys-Gly) (interchain with G-Cter in ubiquitin) cross-links involve residues Lys14 and Lys16. Residue Lys37 is modified to N6-(2-hydroxyisobutyryl)lysine; alternate. Lys37 is subject to N6-(beta-hydroxybutyryl)lysine; alternate. The residue at position 37 (Lys37) is an N6-crotonyllysine; alternate. An N6-(2-hydroxyisobutyryl)lysine mark is found at Lys75 and Lys76. An N6-(2-hydroxyisobutyryl)lysine; alternate modification is found at Lys96. The residue at position 96 (Lys96) is an N6-succinyllysine; alternate. The residue at position 96 (Lys96) is an N6-glutaryllysine; alternate. Gln105 is modified (N5-methylglutamine). Lys119 carries the N6-(2-hydroxyisobutyryl)lysine; alternate modification. 2 positions are modified to N6-crotonyllysine; alternate: Lys119 and Lys120. N6-glutaryllysine; alternate occurs at positions 119 and 120. A Glycyl lysine isopeptide (Lys-Gly) (interchain with G-Cter in ubiquitin); alternate cross-link involves residue Lys120. Thr121 carries the phosphothreonine; by DCAF1 modification. At Lys126 the chain carries N6-crotonyllysine; alternate. Position 126 is an N6-glutaryllysine; alternate (Lys126).

Belongs to the histone H2A family. The nucleosome is a histone octamer containing two molecules each of H2A, H2B, H3 and H4 assembled in one H3-H4 heterotetramer and two H2A-H2B heterodimers. The octamer wraps approximately 147 bp of DNA. In terms of processing, deiminated on Arg-4 in granulocytes upon calcium entry. Post-translationally, monoubiquitination of Lys-120 (H2AK119Ub) by RING1, TRIM37 and RNF2/RING2 complex gives a specific tag for epigenetic transcriptional repression and participates in X chromosome inactivation of female mammals. It is involved in the initiation of both imprinted and random X inactivation. Ubiquitinated H2A is enriched in inactive X chromosome chromatin. Ubiquitination of H2A functions downstream of methylation of 'Lys-27' of histone H3 (H3K27me). H2AK119Ub by RNF2/RING2 can also be induced by ultraviolet and may be involved in DNA repair. Following DNA double-strand breaks (DSBs), it is ubiquitinated through 'Lys-63' linkage of ubiquitin moieties by the E2 ligase UBE2N and the E3 ligases RNF8 and RNF168, leading to the recruitment of repair proteins to sites of DNA damage. Ubiquitination at Lys-14 and Lys-16 (H2AK13Ub and H2AK15Ub, respectively) in response to DNA damage is initiated by RNF168 that mediates monoubiquitination at these 2 sites, and 'Lys-63'-linked ubiquitin are then conjugated to monoubiquitin; RNF8 is able to extend 'Lys-63'-linked ubiquitin chains in vitro. H2AK119Ub and ionizing radiation-induced 'Lys-63'-linked ubiquitination (H2AK13Ub and H2AK15Ub) are distinct events. Phosphorylation on Ser-2 (H2AS1ph) is enhanced during mitosis. Phosphorylation on Ser-2 by RPS6KA5/MSK1 directly represses transcription. Acetylation of H3 inhibits Ser-2 phosphorylation by RPS6KA5/MSK1. Phosphorylation at Thr-121 (H2AT120ph) by DCAF1 is present in the regulatory region of many tumor suppresor genes and down-regulates their transcription. In terms of processing, symmetric dimethylation on Arg-4 by the PRDM1/PRMT5 complex may play a crucial role in the germ-cell lineage. Post-translationally, glutamine methylation at Gln-105 (H2AQ104me) by FBL is specifically dedicated to polymerase I. It is present at 35S ribosomal DNA locus and impairs binding of the FACT complex. Crotonylation (Kcr) is specifically present in male germ cells and marks testis-specific genes in post-meiotic cells, including X-linked genes that escape sex chromosome inactivation in haploid cells. Crotonylation marks active promoters and enhancers and confers resistance to transcriptional repressors. It is also associated with post-meiotically activated genes on autosomes. In terms of processing, lactylated in macrophages by EP300/P300 by using lactoyl-CoA directly derived from endogenous or exogenous lactate, leading to stimulates gene transcription.

It localises to the nucleus. The protein resides in the chromosome. Functionally, core component of nucleosome. Nucleosomes wrap and compact DNA into chromatin, limiting DNA accessibility to the cellular machineries which require DNA as a template. Histones thereby play a central role in transcription regulation, DNA repair, DNA replication and chromosomal stability. DNA accessibility is regulated via a complex set of post-translational modifications of histones, also called histone code, and nucleosome remodeling. In Rattus norvegicus (Rat), this protein is Histone H2A type 1-E.